The primary structure comprises 437 residues: Anhydromevalonate phosphate decarboxylase (437 aa).

Mn(2+) contacts are provided by Asn136 and Glu199. Catalysis depends on Asp247, which acts as the Proton acceptor.

This sequence belongs to the UbiD family. Prenylated FMN serves as cofactor. The cofactor is Mn(2+).

The enzyme catalyses (2E)-3-methyl-5-phosphooxypent-2-enoate + H(+) = isopentenyl phosphate + CO2. Its pathway is isoprenoid biosynthesis; isopentenyl diphosphate biosynthesis via mevalonate pathway. In terms of biological role, catalyzes the conversion of trans-anhydromevalonate 5-phosphate (tAHMP) into isopentenyl phosphate. Involved in the archaeal mevalonate (MVA) pathway, which provides fundamental precursors for isoprenoid biosynthesis, such as isopentenyl diphosphate (IPP) and dimethylallyl diphosphate (DMAPP). The chain is Anhydromevalonate phosphate decarboxylase from Aeropyrum pernix (strain ATCC 700893 / DSM 11879 / JCM 9820 / NBRC 100138 / K1).